Here is a 108-residue protein sequence, read N- to C-terminus: uncharacterized protein (108 aa).

This is an uncharacterized protein from Acanthamoeba polyphaga (Amoeba).